We begin with the raw amino-acid sequence, 573 residues long: Probable zinc metallopeptidase EGY3, chloroplastic (573 aa).

The N-terminal 50 residues, 1-50, are a transit peptide targeting the chloroplast; it reads MASLFVSTPSSSLTLKSCHSLHLRRFDRAEFSNFGKASVNQTTRSRHSLR. The interval 38–105 is disordered; the sequence is SVNQTTRSRH…EKKSKQQEMD (68 aa). Composition is skewed to basic and acidic residues over residues 52 to 62 and 96 to 105; these read SAEDDRVREPV and EKKSKQQEMD. Residues 122 to 185 are a coiled coil; that stretch reads EAAIKLEKTR…KALDLNKLKS (64 aa). The next 7 helical transmembrane spans lie at 274-294, 305-325, 376-396, 414-434, 441-461, 493-513, and 536-556; these read VSAIALCVTTFGTIALMSGFF, IANVVPLFGGFLSILGVSEIA, ASAYLTSLLLAAAAFISDGSF, PLLSFVQFVVGPYADDLGNVL, VGVPVDPLAFAGLLGMVVTSL, LLLGIGGLSGSVLCLAWGLFA, and FAWGIVLGLICFLTLFPNSGG.

This sequence belongs to the peptidase M50B family.

The protein resides in the plastid. It is found in the chloroplast membrane. Probable membrane-associated metalloprotease that may be involved in chloroplast development. The chain is Probable zinc metallopeptidase EGY3, chloroplastic (EGY3) from Arabidopsis thaliana (Mouse-ear cress).